Consider the following 397-residue polypeptide: tRNA(Ile)-lysidine synthase (397 aa).

An ATP-binding site is contributed by 44–49; sequence SGGADS.

The protein belongs to the tRNA(Ile)-lysidine synthase family.

It localises to the cytoplasm. The enzyme catalyses cytidine(34) in tRNA(Ile2) + L-lysine + ATP = lysidine(34) in tRNA(Ile2) + AMP + diphosphate + H(+). Its function is as follows. Ligates lysine onto the cytidine present at position 34 of the AUA codon-specific tRNA(Ile) that contains the anticodon CAU, in an ATP-dependent manner. Cytidine is converted to lysidine, thus changing the amino acid specificity of the tRNA from methionine to isoleucine. The polypeptide is tRNA(Ile)-lysidine synthase (Rhodopirellula baltica (strain DSM 10527 / NCIMB 13988 / SH1)).